The following is a 313-amino-acid chain: HPr kinase/phosphorylase (313 aa).

Active-site residues include His136 and Lys157. 151–158 serves as a coordination point for ATP; sequence GDSGIGKS. Ser158 provides a ligand contact to Mg(2+). The active-site Proton acceptor; for phosphorylation activity. Proton donor; for dephosphorylation activity is the Asp175. An important for the catalytic mechanism of both phosphorylation and dephosphorylation region spans residues 199-208; the sequence is LEIRGLGIIN. Glu200 is a Mg(2+) binding site. Arg241 is a catalytic residue. The tract at residues 262–267 is important for the catalytic mechanism of dephosphorylation; that stretch reads PVRPGR.

It belongs to the HPrK/P family. In terms of assembly, homohexamer. It depends on Mg(2+) as a cofactor.

It catalyses the reaction [HPr protein]-L-serine + ATP = [HPr protein]-O-phospho-L-serine + ADP + H(+). The enzyme catalyses [HPr protein]-O-phospho-L-serine + phosphate + H(+) = [HPr protein]-L-serine + diphosphate. Functionally, catalyzes the ATP- as well as the pyrophosphate-dependent phosphorylation of a specific serine residue in HPr, a phosphocarrier protein of the phosphoenolpyruvate-dependent sugar phosphotransferase system (PTS). HprK/P also catalyzes the pyrophosphate-producing, inorganic phosphate-dependent dephosphorylation (phosphorolysis) of seryl-phosphorylated HPr (P-Ser-HPr). The two antagonistic activities of HprK/P are regulated by several intracellular metabolites, which change their concentration in response to the absence or presence of rapidly metabolisable carbon sources (glucose, fructose, etc.) in the growth medium. Therefore, by controlling the phosphorylation state of HPr, HPrK/P is a sensor enzyme that plays a major role in the regulation of carbon metabolism and sugar transport: it mediates carbon catabolite repression (CCR), and regulates PTS-catalyzed carbohydrate uptake and inducer exclusion. This is HPr kinase/phosphorylase from Staphylococcus saprophyticus subsp. saprophyticus (strain ATCC 15305 / DSM 20229 / NCIMB 8711 / NCTC 7292 / S-41).